Here is a 152-residue protein sequence, read N- to C-terminus: MKTLIVAALFCTIGMALADDTPPPPPFLAGAPQDVVKAFFELLKKDETKTDPEIEKDLDAWVDTLGGDYKAKFETFKKEMKAKEAELAKAHEEAVAKMTPEAKKADAELSKIAEDDSLNGIQKAQKIQAIYKTLPQSVKDELEKGIGPAVPQ.

The first 18 residues, 1–18 (MKTLIVAALFCTIGMALA), serve as a signal peptide directing secretion. Necessary for IgE-binding regions lie at residues 25–42 (PPFL…FFEL), 49–54 (KTDPEI), 58–66 (LDAWVDTLG), and 103–120 (KKAD…SLNG). 2 igG4-binding regions span residues 49 to 68 (KTDP…LGGD) and 118 to 137 (LNGI…LPQS). The segment at 127 to 146 (IQAIYKTLPQSVKDELEKGI) is igE-binding and IgG4-binding.

The protein belongs to the SXP/RAL-2 family. In terms of assembly, monomer. In terms of tissue distribution, excretory gland, ventriculus, and the luminal epithelium of the intestine of the larvae.

It localises to the secreted. In Anisakis simplex (Herring worm), this protein is SXP/RAL-2 family protein Ani s 5.